A 501-amino-acid chain; its full sequence is DEAD-box ATP-dependent RNA helicase 36 (501 aa).

The interval 1–68 (MEVDGEARPF…AAAVTEHAGD (68 aa)) is disordered. A compositionally biased stretch (pro residues) spans 36–46 (EEPPNPSPSPA). Residues 59-68 (AAAVTEHAGD) show a composition bias toward low complexity. The Q motif motif lies at 77-105 (STFAELGLSQWLVDVCDSLGMRVPTAVQR). Residues 108–281 (IPRALEGRDV…ELSGNNSYFF (174 aa)) form the Helicase ATP-binding domain. An ATP-binding site is contributed by 121–128 (AETGSGKT). Positions 229–232 (DEAD) match the DEAD box motif. Positions 292-456 (TLKQLYIHVP…AYDGEMRDVN (165 aa)) constitute a Helicase C-terminal domain. Residues 473 to 486 (MADEGHEDKVQARK) are compositionally biased toward basic and acidic residues. The tract at residues 473–501 (MADEGHEDKVQARKEQKKRAQERKRKHDE) is disordered. Residues 475–501 (DEGHEDKVQARKEQKKRAQERKRKHDE) are a coiled coil. Positions 487 to 501 (EQKKRAQERKRKHDE) are enriched in basic residues.

Belongs to the DEAD box helicase family. DDX49/DBP8 subfamily.

It catalyses the reaction ATP + H2O = ADP + phosphate + H(+). The protein is DEAD-box ATP-dependent RNA helicase 36 of Oryza sativa subsp. japonica (Rice).